The sequence spans 565 residues: Bifunctional dihydrofolate reductase-thymidylate synthase 2 (565 aa).

Positions threonine 65–arginine 242 constitute a DHFR domain. Valine 69 is a substrate binding site. Residues alanine 71 and glycine 77 to lysine 83 each bind NADP(+). Aspartate 91 contacts substrate. Residues arginine 115–threonine 117 and leucine 136–serine 139 contribute to the NADP(+) site. Position 178 (isoleucine 178) interacts with substrate. An NADP(+)-binding site is contributed by glycine 179–glutamate 186. A substrate-binding site is contributed by threonine 199. Positions serine 245–histidine 280 are hinge. The interval glutamate 281–valine 565 is thymidylate synthase. Arginine 302 provides a ligand contact to dUMP. Residue cysteine 447 is part of the active site. Residues histidine 448, glutamine 466–aspartate 470, asparagine 478, and histidine 508–tyrosine 510 each bind dUMP.

In the N-terminal section; belongs to the dihydrofolate reductase family. The protein in the C-terminal section; belongs to the thymidylate synthase family. Heterodimer or homodimer.

It carries out the reaction (6S)-5,6,7,8-tetrahydrofolate + NADP(+) = 7,8-dihydrofolate + NADPH + H(+). The enzyme catalyses dUMP + (6R)-5,10-methylene-5,6,7,8-tetrahydrofolate = 7,8-dihydrofolate + dTMP. Its pathway is cofactor biosynthesis; tetrahydrofolate biosynthesis; 5,6,7,8-tetrahydrofolate from 7,8-dihydrofolate: step 1/1. Bifunctional enzyme. Involved in de novo dTMP biosynthesis. Key enzyme in folate metabolism. Can play two different roles depending on the source of dihydrofolate: de novo synthesis of tetrahydrofolate or recycling of the dihydrofolate released as one of the end products of the TS catalyzed reaction. Catalyzes an essential reaction for de novo glycine and purine synthesis, DNA precursor synthesis, and for the conversion of dUMP to dTMP. This Arabidopsis thaliana (Mouse-ear cress) protein is Bifunctional dihydrofolate reductase-thymidylate synthase 2 (THY-2).